The chain runs to 310 residues: MLSLRVPTPTSFDFRRYQAGDLERRWRLSRDSFLSFSPKFEENRGFRFGVKSSKSDVSFTAAEEEETLPEELHAELMPKHVAIIMDGNGRWAKNRGLQPWDGHRAGVEALKEIVELCGKWGIQVLTVFAFSTDNWIRPRIEIDFLFSLFERSLKTEFQNLAKNNVRISIIGDSSKLPKSLLRVINEVEEVTKNNTRLQLIVAVGYSGKYDVLQACRGIARRVKDGEIEVEEIDERLIEEELETNCTEFPYPDLLIRTSGELRVSNFLLWQLAYTELFFAQELWPDFGRSGFIEALMSFQQRQRRFGGRKS.

This sequence belongs to the UPP synthase family. Mg(2+) is required as a cofactor.

It participates in protein modification; protein glycosylation. Functionally, catalyzes cis-prenyl chain elongation to produce the polyprenyl backbone of dolichol, a glycosyl carrier-lipid required for the biosynthesis of several classes of glycoprotein. The chain is Dehydrodolichyl diphosphate synthase 2 from Arabidopsis thaliana (Mouse-ear cress).